Here is a 274-residue protein sequence, read N- to C-terminus: NH(3)-dependent NAD(+) synthetase (274 aa).

Residue 46-53 (GISGGQDS) coordinates ATP. D52 provides a ligand contact to Mg(2+). R140 is a deamido-NAD(+) binding site. T160 is a binding site for ATP. Residue E165 coordinates Mg(2+). Deamido-NAD(+) contacts are provided by K173 and D180. Residues K189 and T211 each contribute to the ATP site. 260-261 (HK) provides a ligand contact to deamido-NAD(+).

It belongs to the NAD synthetase family. Homodimer.

It catalyses the reaction deamido-NAD(+) + NH4(+) + ATP = AMP + diphosphate + NAD(+) + H(+). It participates in cofactor biosynthesis; NAD(+) biosynthesis; NAD(+) from deamido-NAD(+) (ammonia route): step 1/1. Functionally, catalyzes the ATP-dependent amidation of deamido-NAD to form NAD. Uses ammonia as a nitrogen source. The chain is NH(3)-dependent NAD(+) synthetase from Lactococcus lactis subsp. cremoris (strain SK11).